Reading from the N-terminus, the 371-residue chain is Anhydro-N-acetylmuramic acid kinase (371 aa).

12 to 19 (GTSADGID) is an ATP binding site.

Belongs to the anhydro-N-acetylmuramic acid kinase family.

It carries out the reaction 1,6-anhydro-N-acetyl-beta-muramate + ATP + H2O = N-acetyl-D-muramate 6-phosphate + ADP + H(+). It functions in the pathway amino-sugar metabolism; 1,6-anhydro-N-acetylmuramate degradation. The protein operates within cell wall biogenesis; peptidoglycan recycling. Catalyzes the specific phosphorylation of 1,6-anhydro-N-acetylmuramic acid (anhMurNAc) with the simultaneous cleavage of the 1,6-anhydro ring, generating MurNAc-6-P. Is required for the utilization of anhMurNAc either imported from the medium or derived from its own cell wall murein, and thus plays a role in cell wall recycling. This chain is Anhydro-N-acetylmuramic acid kinase, found in Saccharophagus degradans (strain 2-40 / ATCC 43961 / DSM 17024).